Here is a 406-residue protein sequence, read N- to C-terminus: Multifunctional CCA protein (406 aa).

Positions 8 and 11 each coordinate ATP. The CTP site is built by Gly-8 and Arg-11. Mg(2+)-binding residues include Asp-21 and Asp-23. The ATP site is built by Arg-91, Arg-138, and Arg-141. CTP contacts are provided by Arg-91, Arg-138, and Arg-141. An HD domain is found at 229–331 (TGIHQEMVSD…LELLGRCDAL (103 aa)).

This sequence belongs to the tRNA nucleotidyltransferase/poly(A) polymerase family. Bacterial CCA-adding enzyme type 1 subfamily. Monomer. Can also form homodimers and oligomers. Requires Mg(2+) as cofactor. It depends on Ni(2+) as a cofactor.

It carries out the reaction a tRNA precursor + 2 CTP + ATP = a tRNA with a 3' CCA end + 3 diphosphate. The enzyme catalyses a tRNA with a 3' CCA end + 2 CTP + ATP = a tRNA with a 3' CCACCA end + 3 diphosphate. Its function is as follows. Catalyzes the addition and repair of the essential 3'-terminal CCA sequence in tRNAs without using a nucleic acid template. Adds these three nucleotides in the order of C, C, and A to the tRNA nucleotide-73, using CTP and ATP as substrates and producing inorganic pyrophosphate. tRNA 3'-terminal CCA addition is required both for tRNA processing and repair. Also involved in tRNA surveillance by mediating tandem CCA addition to generate a CCACCA at the 3' terminus of unstable tRNAs. While stable tRNAs receive only 3'-terminal CCA, unstable tRNAs are marked with CCACCA and rapidly degraded. The polypeptide is Multifunctional CCA protein (Stenotrophomonas maltophilia (strain K279a)).